A 480-amino-acid chain; its full sequence is Protein nucleotidyltransferase YdiU (480 aa).

ATP-binding residues include Gly-86, Gly-88, Arg-89, Lys-109, Asp-121, Gly-122, Arg-172, and Arg-179. Asp-248 functions as the Proton acceptor in the catalytic mechanism. The Mg(2+) site is built by Asn-249 and Asp-258. Asp-258 provides a ligand contact to ATP.

This sequence belongs to the SELO family. Requires Mg(2+) as cofactor. Mn(2+) serves as cofactor.

The enzyme catalyses L-seryl-[protein] + ATP = 3-O-(5'-adenylyl)-L-seryl-[protein] + diphosphate. The catalysed reaction is L-threonyl-[protein] + ATP = 3-O-(5'-adenylyl)-L-threonyl-[protein] + diphosphate. It carries out the reaction L-tyrosyl-[protein] + ATP = O-(5'-adenylyl)-L-tyrosyl-[protein] + diphosphate. It catalyses the reaction L-histidyl-[protein] + UTP = N(tele)-(5'-uridylyl)-L-histidyl-[protein] + diphosphate. The enzyme catalyses L-seryl-[protein] + UTP = O-(5'-uridylyl)-L-seryl-[protein] + diphosphate. The catalysed reaction is L-tyrosyl-[protein] + UTP = O-(5'-uridylyl)-L-tyrosyl-[protein] + diphosphate. Functionally, nucleotidyltransferase involved in the post-translational modification of proteins. It can catalyze the addition of adenosine monophosphate (AMP) or uridine monophosphate (UMP) to a protein, resulting in modifications known as AMPylation and UMPylation. This chain is Protein nucleotidyltransferase YdiU, found in Salmonella arizonae (strain ATCC BAA-731 / CDC346-86 / RSK2980).